A 188-amino-acid polypeptide reads, in one-letter code: Adenine phosphoribosyltransferase (188 aa).

134–138 (ATGGS) contacts AMP.

Belongs to the purine/pyrimidine phosphoribosyltransferase family. In terms of assembly, homodimer. Requires Mg(2+) as cofactor.

The protein resides in the cytoplasm. It is found in the nucleus. It catalyses the reaction AMP + diphosphate = 5-phospho-alpha-D-ribose 1-diphosphate + adenine. It participates in purine metabolism; AMP biosynthesis via salvage pathway; AMP from adenine: step 1/1. In terms of biological role, catalyzes a salvage reaction resulting in the formation of AMP, that is energically less costly than de novo synthesis. The sequence is that of Adenine phosphoribosyltransferase (APT1) from Candida albicans (strain SC5314 / ATCC MYA-2876) (Yeast).